Reading from the N-terminus, the 661-residue chain is tRNA uridine 5-carboxymethylaminomethyl modification enzyme MnmG (661 aa).

13–18 (GGGHAG) serves as a coordination point for FAD. 285–299 (GPRYCPSVEDKINRF) serves as a coordination point for NAD(+).

The protein belongs to the MnmG family. As to quaternary structure, homodimer. Heterotetramer of two MnmE and two MnmG subunits. The cofactor is FAD.

It is found in the cytoplasm. Functionally, NAD-binding protein involved in the addition of a carboxymethylaminomethyl (cmnm) group at the wobble position (U34) of certain tRNAs, forming tRNA-cmnm(5)s(2)U34. The protein is tRNA uridine 5-carboxymethylaminomethyl modification enzyme MnmG of Acidovorax sp. (strain JS42).